The following is a 251-amino-acid chain: Triosephosphate isomerase (251 aa).

8–10 (NWK) contributes to the substrate binding site. The Electrophile role is filled by His-97. The Proton acceptor role is filled by Glu-170. Residues Gly-176, Ser-215, and 236 to 237 (GG) contribute to the substrate site.

This sequence belongs to the triosephosphate isomerase family. Homodimer.

It is found in the cytoplasm. The catalysed reaction is D-glyceraldehyde 3-phosphate = dihydroxyacetone phosphate. It participates in carbohydrate biosynthesis; gluconeogenesis. The protein operates within carbohydrate degradation; glycolysis; D-glyceraldehyde 3-phosphate from glycerone phosphate: step 1/1. Functionally, involved in the gluconeogenesis. Catalyzes stereospecifically the conversion of dihydroxyacetone phosphate (DHAP) to D-glyceraldehyde-3-phosphate (G3P). This chain is Triosephosphate isomerase, found in Nitratidesulfovibrio vulgaris (strain DSM 19637 / Miyazaki F) (Desulfovibrio vulgaris).